The following is a 178-amino-acid chain: Bifunctional protein PyrR (178 aa).

The PRPP-binding signature appears at V99–T111.

This sequence belongs to the purine/pyrimidine phosphoribosyltransferase family. PyrR subfamily. In terms of assembly, homodimer and homohexamer; in equilibrium.

It carries out the reaction UMP + diphosphate = 5-phospho-alpha-D-ribose 1-diphosphate + uracil. Functionally, regulates transcriptional attenuation of the pyrimidine nucleotide (pyr) operon by binding in a uridine-dependent manner to specific sites on pyr mRNA. This disrupts an antiterminator hairpin in the RNA and favors formation of a downstream transcription terminator, leading to a reduced expression of downstream genes. Also displays a weak uracil phosphoribosyltransferase activity which is not physiologically significant. In Limosilactobacillus reuteri subsp. reuteri (strain JCM 1112) (Lactobacillus reuteri), this protein is Bifunctional protein PyrR.